The chain runs to 136 residues: Acidic phospholipase A2 EC-I (136 aa).

An N-terminal signal peptide occupies residues 1–16; sequence MKTLWIVAVWLIAVEG. 7 disulfide bridges follow: cysteine 42–cysteine 129, cysteine 44–cysteine 60, cysteine 59–cysteine 111, cysteine 65–cysteine 136, cysteine 66–cysteine 104, cysteine 73–cysteine 97, and cysteine 91–cysteine 102. The Ca(2+) site is built by tyrosine 43, glycine 45, and glycine 47. Histidine 63 is an active-site residue. Residue aspartate 64 participates in Ca(2+) binding. The active site involves aspartate 105. Positions 112 to 133 are may be responsible for inhibition of the platelet-aggregation activity; sequence LGENVNTYDKKYKSYEDCTEEV.

It belongs to the phospholipase A2 family. Group II subfamily. D49 sub-subfamily. As to quaternary structure, monomer. Ca(2+) serves as cofactor. In terms of tissue distribution, expressed by the venom gland.

The protein localises to the secreted. The catalysed reaction is a 1,2-diacyl-sn-glycero-3-phosphocholine + H2O = a 1-acyl-sn-glycero-3-phosphocholine + a fatty acid + H(+). Its function is as follows. Snake venom phospholipase A2 (PLA2) that inhibits human platelet aggregation induced by ADP, collagen and epinephrin (possibly by binding the platelet receptor alpha-IIb/beta-III) and induces mild edema in the foot pads of mice. PLA2 catalyzes the calcium-dependent hydrolysis of the 2-acyl groups in 3-sn-phosphoglycerides. This Echis carinatus (Saw-scaled viper) protein is Acidic phospholipase A2 EC-I.